Here is a 179-residue protein sequence, read N- to C-terminus: Large ribosomal subunit protein uL5 (179 aa).

It belongs to the universal ribosomal protein uL5 family. As to quaternary structure, part of the 50S ribosomal subunit; part of the 5S rRNA/L5/L18/L25 subcomplex. Contacts the 5S rRNA and the P site tRNA. Forms a bridge to the 30S subunit in the 70S ribosome.

Its function is as follows. This is one of the proteins that bind and probably mediate the attachment of the 5S RNA into the large ribosomal subunit, where it forms part of the central protuberance. In the 70S ribosome it contacts protein S13 of the 30S subunit (bridge B1b), connecting the 2 subunits; this bridge is implicated in subunit movement. Contacts the P site tRNA; the 5S rRNA and some of its associated proteins might help stabilize positioning of ribosome-bound tRNAs. The protein is Large ribosomal subunit protein uL5 of Shewanella oneidensis (strain ATCC 700550 / JCM 31522 / CIP 106686 / LMG 19005 / NCIMB 14063 / MR-1).